Reading from the N-terminus, the 294-residue chain is Acetylglutamate kinase (294 aa).

Residues 63-64 (GG), arginine 85, and asparagine 188 contribute to the substrate site.

Belongs to the acetylglutamate kinase family. ArgB subfamily.

It localises to the cytoplasm. The catalysed reaction is N-acetyl-L-glutamate + ATP = N-acetyl-L-glutamyl 5-phosphate + ADP. The protein operates within amino-acid biosynthesis; L-arginine biosynthesis; N(2)-acetyl-L-ornithine from L-glutamate: step 2/4. Catalyzes the ATP-dependent phosphorylation of N-acetyl-L-glutamate. The chain is Acetylglutamate kinase from Methanococcus maripaludis (strain C7 / ATCC BAA-1331).